The primary structure comprises 280 residues: Borealin (280 aa).

Over residues 140 to 153 the composition is skewed to basic residues; sequence KVAAKKPSTARRTR. The segment at 140-187 is disordered; sequence KVAAKKPSTARRTRASVGNVANTSKRTSKRGRATPSASKQAETSLLGY.

This sequence belongs to the borealin family. In terms of assembly, component of the CPC at least composed of survivin/birc5, incenp, cdca8/borealin and/or cdca9/dasra-A, and aurkb/aurora-B. Interacts with incenp (via N-terminus).

The protein resides in the nucleus. Its subcellular location is the chromosome. It localises to the centromere. It is found in the cytoplasm. The protein localises to the cytoskeleton. The protein resides in the spindle. Its function is as follows. Component of the chromosomal passenger complex (CPC), a complex that acts as a key regulator of mitosis. The CPC complex has essential functions at the centromere in ensuring correct chromosome alignment and segregation and is required for chromatin-induced microtubule stabilization and spindle assembly. Contributes to CPC function by facilitating loading of the CPC onto chromosomes. The polypeptide is Borealin (cdca8) (Xenopus laevis (African clawed frog)).